The chain runs to 189 residues: Crossover junction endodeoxyribonuclease RuvC (189 aa).

Residues D7, E68, and D141 contribute to the active site. Residues D7, E68, and D141 each contribute to the Mg(2+) site.

Belongs to the RuvC family. In terms of assembly, homodimer which binds Holliday junction (HJ) DNA. The HJ becomes 2-fold symmetrical on binding to RuvC with unstacked arms; it has a different conformation from HJ DNA in complex with RuvA. In the full resolvosome a probable DNA-RuvA(4)-RuvB(12)-RuvC(2) complex forms which resolves the HJ. Mg(2+) is required as a cofactor.

Its subcellular location is the cytoplasm. The enzyme catalyses Endonucleolytic cleavage at a junction such as a reciprocal single-stranded crossover between two homologous DNA duplexes (Holliday junction).. Its function is as follows. The RuvA-RuvB-RuvC complex processes Holliday junction (HJ) DNA during genetic recombination and DNA repair. Endonuclease that resolves HJ intermediates. Cleaves cruciform DNA by making single-stranded nicks across the HJ at symmetrical positions within the homologous arms, yielding a 5'-phosphate and a 3'-hydroxyl group; requires a central core of homology in the junction. The consensus cleavage sequence is 5'-(A/T)TT(C/G)-3'. Cleavage occurs on the 3'-side of the TT dinucleotide at the point of strand exchange. HJ branch migration catalyzed by RuvA-RuvB allows RuvC to scan DNA until it finds its consensus sequence, where it cleaves and resolves the cruciform DNA. The chain is Crossover junction endodeoxyribonuclease RuvC from Rhodococcus opacus (strain B4).